Consider the following 423-residue polypeptide: Keratin, type I cytoskeletal 18 (423 aa).

Position 2 is an N-acetylserine (S2). Positions 2 to 71 (SFTTRSTTFS…GLAGMGGVQT (70 aa)) are head. Phosphoserine is present on residues S7, S11, S16, and S19. S31 and S32 each carry phosphoserine; alternate. O-linked (GlcNAc) serine; alternate glycans are attached at residues S31 and S32. At S35 the chain carries Phosphoserine. A Phosphotyrosine modification is found at Y37. S43 carries the phosphoserine modification. R46 is modified (omega-N-methylarginine). Position 50 is a phosphoserine; alternate (S50). O-linked (GlcNAc) serine; alternate glycosylation occurs at S50. S52 bears the Phosphoserine; by MAPKAPK2 and MAPKAPK3 mark. S57 and S60 each carry phosphoserine. Residues 62 to 366 (GLAGMGGVQT…EALLNIKVKL (305 aa)) form a necessary for interaction with PNN region. Residues 69-121 (VQTEKETMQDLNDRLASYLDKVKNLETENRRLESKIREYLEKRGPQGVRDWGH) form an interaction with TRADD region. The segment at 72–107 (EKETMQDLNDRLASYLDKVKNLETENRRLESKIREY) is coil 1A. The IF rod domain occupies 72–384 (EKETMQDLND…RLLEDGDDFS (313 aa)). K73 participates in a covalent cross-link: Glycyl lysine isopeptide (Lys-Gly) (interchain with G-Cter in SUMO2). S85 carries the post-translational modification Phosphoserine. Residues 108–125 (LEKRGPQGVRDWGHYFKT) form a linker 1 region. An N6-acetyllysine modification is found at K124. A coil 1B region spans residues 126-217 (IEDLRAQIFA…KNHEEEVQGL (92 aa)). Phosphoserine is present on residues S137 and S170. The linker 12 stretch occupies residues 218–241 (EAQIASSGLTVEVDAPKSQDLSKI). The tract at residues 236-384 (QDLSKIMADI…RLLEDGDDFS (149 aa)) is interaction with DNAJB6. Residue K240 forms a Glycyl lysine isopeptide (Lys-Gly) (interchain with G-Cter in SUMO2) linkage. The tract at residues 242–380 (MADIRAQYEQ…ATYRRLLEDG (139 aa)) is coil 2. T295 bears the Phosphothreonine mark. Glycyl lysine isopeptide (Lys-Gly) (interchain with G-Cter in SUMO2) cross-links involve residues K363 and K365. Residues 381 to 423 (DDFSLNDALDSSNSMQTVQRTTTRKVVDGKVVSETNDTRVLRH) form a tail region. Phosphoserine occurs at positions 384, 391, 392, and 394. The residue at position 397 (T397) is a Phosphothreonine. A Glycyl lysine isopeptide (Lys-Gly) (interchain with G-Cter in SUMO2) cross-link involves residue K410.

The protein belongs to the intermediate filament family. In terms of assembly, heterotetramer of two type I and two type II keratins. KRT18 associates with KRT8. Interacts with PNN and mutated CFTR. Interacts with YWHAE, YWHAH and YWHAZ only when phosphorylated. Interacts with DNAJB6, TCHP and TRADD. Interacts with the thrombin-antithrombin complex. Interacts with FAM83H. Interacts with EPPK1. Interacts with PKP1 and PKP2. Post-translationally, phosphorylation increases by IL-6. Proteolytically cleaved by caspases during epithelial cell apoptosis. Cleavage occurs at Asp-231 by either caspase-3, caspase-6 or caspase-7. In terms of processing, dephosphorylated by ethanol. Post-translationally, O-GlcNAcylation increases solubility, and decreases stability by inducing proteasomal degradation. Expressed on the plasma membrane of hepatocytes and in the narrow apical portions of supporting cells in the vomeronasal sensory epithelium. Detected in the type III alveolar cells of the lung, in the proliferative crypt epithelium of the small intestine and in the older intragemmal cells of the tongue.

Its subcellular location is the nucleus matrix. The protein localises to the cytoplasm. It is found in the perinuclear region. The protein resides in the nucleus. It localises to the nucleolus. Functionally, when phosphorylated, plays a role in filament reorganization. Involved in the delivery of mutated CFTR to the plasma membrane. Together with KRT8, is involved in interleukin-6 (IL-6)-mediated barrier protection. Involved in the uptake of thrombin-antithrombin complexes by hepatic cells. The chain is Keratin, type I cytoskeletal 18 from Rattus norvegicus (Rat).